Consider the following 279-residue polypeptide: Phosphonates import ATP-binding protein PhnC (279 aa).

The ABC transporter domain occupies 2–245 (FQLKNVTRQF…AVAAIYGAET (244 aa)). 34–41 (GRSGAGKS) is an ATP binding site.

Belongs to the ABC transporter superfamily. Phosphonates importer (TC 3.A.1.9.1) family. The complex is composed of two ATP-binding proteins (PhnC), two transmembrane proteins (PhnE) and a solute-binding protein (PhnD).

It localises to the cell inner membrane. It catalyses the reaction phosphonate(out) + ATP + H2O = phosphonate(in) + ADP + phosphate + H(+). Functionally, part of the ABC transporter complex PhnCDE involved in phosphonates import. Responsible for energy coupling to the transport system. This Rhizobium meliloti (strain 1021) (Ensifer meliloti) protein is Phosphonates import ATP-binding protein PhnC.